A 396-amino-acid chain; its full sequence is Argininosuccinate synthase (396 aa).

Position 6-14 (6-14 (AYSGGLDTS)) interacts with ATP. Position 83 (tyrosine 83) interacts with L-citrulline. Glycine 113 is a binding site for ATP. The L-aspartate site is built by threonine 115, asparagine 119, and aspartate 120. Asparagine 119 is an L-citrulline binding site. Residues arginine 123, serine 171, serine 180, glutamate 256, and tyrosine 268 each contribute to the L-citrulline site.

Belongs to the argininosuccinate synthase family. Type 1 subfamily. In terms of assembly, homotetramer.

It localises to the cytoplasm. The catalysed reaction is L-citrulline + L-aspartate + ATP = 2-(N(omega)-L-arginino)succinate + AMP + diphosphate + H(+). It participates in amino-acid biosynthesis; L-arginine biosynthesis; L-arginine from L-ornithine and carbamoyl phosphate: step 2/3. The sequence is that of Argininosuccinate synthase from Hyperthermus butylicus (strain DSM 5456 / JCM 9403 / PLM1-5).